The sequence spans 623 residues: Chaperone protein DnaK (623 aa).

A Phosphothreonine; by autocatalysis modification is found at threonine 175. The disordered stretch occupies residues 578-623; that stretch reads ANPEGAPGAGFDPNNMGGANAGNASAGNDKKDDNVVDADFKVEDDK. The span at 591–604 shows a compositional bias: low complexity; it reads NNMGGANAGNASAG. Residues 605–623 are compositionally biased toward basic and acidic residues; that stretch reads NDKKDDNVVDADFKVEDDK.

It belongs to the heat shock protein 70 family.

Functionally, acts as a chaperone. The polypeptide is Chaperone protein DnaK (Clostridium botulinum (strain 657 / Type Ba4)).